Here is a 400-residue protein sequence, read N- to C-terminus: MAP kinase-activated protein kinase 2 (400 aa).

The disordered stretch occupies residues 1–43 (MLSNSQGQSPPVPFPAPAPPPQPPTPALPHPPAQPPPPPPQQF). S9 is modified (phosphoserine). Positions 10–42 (PPVPFPAPAPPPQPPTPALPHPPAQPPPPPPQQ) are enriched in pro residues. T25 is modified (phosphothreonine). Residues 64–325 (KVTSQVLGLG…ITEFMNHPWI (262 aa)) enclose the Protein kinase domain. Residues 70–78 (LGLGINGKV) and K93 each bind ATP. Position 139–141 (139–141 (ECL)) interacts with staurosporine. D186 serves as the catalytic Proton acceptor. T222 bears the Phosphothreonine; by MAPK14 mark. At S272 the chain carries Phosphoserine; by MAPK14. S328 is modified (phosphoserine; by autocatalysis). The interval 328–364 (STKVPQTPLHTSRVLKEDKERWEDVKEEMTSALATMR) is autoinhibitory helix. Residue T334 is modified to Phosphothreonine; by MAPK14. Residue K353 forms a Glycyl lysine isopeptide (Lys-Gly) (interchain with G-Cter in SUMO) linkage. The short motif at 356-365 (MTSALATMRV) is the Nuclear export signal (NES) element. Residues 366-390 (DYEQIKIKKIEDASNPLLLKRRKKA) are p38 MAPK-binding site. 2 consecutive short sequence motifs (bipartite nuclear localization signal) follow at residues 371–374 (KIKK) and 385–389 (KRRKK).

The protein belongs to the protein kinase superfamily. CAMK Ser/Thr protein kinase family. As to quaternary structure, heterodimer with p38-alpha/MAPK14; this heterodimer forms a stable complex: molecules are positioned 'face to face' so that the ATP-binding sites of both kinases are at the heterodimer interface. Interacts with PHC2. Interacts with HSF1. Post-translationally, sumoylation inhibits the protein kinase activity. In terms of processing, phosphorylated and activated by MAP kinase p38-alpha/MAPK14 at Thr-222, Ser-272 and Thr-334. In terms of tissue distribution, expressed in all tissues examined.

It is found in the cytoplasm. Its subcellular location is the nucleus. The catalysed reaction is L-seryl-[protein] + ATP = O-phospho-L-seryl-[protein] + ADP + H(+). It carries out the reaction L-threonyl-[protein] + ATP = O-phospho-L-threonyl-[protein] + ADP + H(+). Activated following phosphorylation by p38-alpha/MAPK14 following various stresses. Inhibited following sumoylation. Specifically inhibited by pyrrolopyridine inhibitors. Functionally, stress-activated serine/threonine-protein kinase involved in cytokine production, endocytosis, reorganization of the cytoskeleton, cell migration, cell cycle control, chromatin remodeling, DNA damage response and transcriptional regulation. Following stress, it is phosphorylated and activated by MAP kinase p38-alpha/MAPK14, leading to phosphorylation of substrates. Phosphorylates serine in the peptide sequence, Hyd-X-R-X(2)-S, where Hyd is a large hydrophobic residue. Phosphorylates ALOX5, CDC25B, CDC25C, CEP131, ELAVL1, HNRNPA0, HSP27/HSPB1, KRT18, KRT20, LIMK1, LSP1, PABPC1, PARN, PDE4A, RCSD1, RPS6KA3, TAB3 and TTP/ZFP36. Phosphorylates HSF1; leading to the interaction with HSP90 proteins and inhibiting HSF1 homotrimerization, DNA-binding and transactivation activities. Mediates phosphorylation of HSP27/HSPB1 in response to stress, leading to the dissociation of HSP27/HSPB1 from large small heat-shock protein (sHsps) oligomers and impairment of their chaperone activities and ability to protect against oxidative stress effectively. Involved in inflammatory response by regulating tumor necrosis factor (TNF) and IL6 production post-transcriptionally: acts by phosphorylating AU-rich elements (AREs)-binding proteins ELAVL1, HNRNPA0, PABPC1 and TTP/ZFP36, leading to the regulation of the stability and translation of TNF and IL6 mRNAs. Phosphorylation of TTP/ZFP36, a major post-transcriptional regulator of TNF, promotes its binding to 14-3-3 proteins and reduces its ARE mRNA affinity, leading to inhibition of dependent degradation of ARE-containing transcripts. Phosphorylates CEP131 in response to cellular stress induced by ultraviolet irradiation which promotes binding of CEP131 to 14-3-3 proteins and inhibits formation of novel centriolar satellites. Also involved in late G2/M checkpoint following DNA damage through a process of post-transcriptional mRNA stabilization: following DNA damage, relocalizes from nucleus to cytoplasm and phosphorylates HNRNPA0 and PARN, leading to stabilization of GADD45A mRNA. Involved in toll-like receptor signaling pathway (TLR) in dendritic cells: required for acute TLR-induced macropinocytosis by phosphorylating and activating RPS6KA3. The sequence is that of MAP kinase-activated protein kinase 2 (MAPKAPK2) from Homo sapiens (Human).